A 66-amino-acid chain; its full sequence is Large ribosomal subunit protein bL35 (66 aa).

Positions Met-1 to Arg-24 are enriched in basic residues. A disordered region spans residues Met-1–His-26.

The protein belongs to the bacterial ribosomal protein bL35 family.

This chain is Large ribosomal subunit protein bL35, found in Bacillus cytotoxicus (strain DSM 22905 / CIP 110041 / 391-98 / NVH 391-98).